We begin with the raw amino-acid sequence, 550 residues long: Glucose-6-phosphate isomerase (550 aa).

D-glucose 6-phosphate contacts are provided by residues 163–164 (GS), 214–219 (SKTFTT), Q358, E362, H393, and K515. Catalysis depends on E362, which acts as the Proton donor. Residues H393 and K515 contribute to the active site.

It belongs to the GPI family. In terms of assembly, homodimer.

The protein localises to the cytoplasm. The enzyme catalyses alpha-D-glucose 6-phosphate = beta-D-fructose 6-phosphate. The protein operates within carbohydrate degradation; glycolysis; D-glyceraldehyde 3-phosphate and glycerone phosphate from D-glucose: step 2/4. In the cytoplasm, catalyzes the conversion of glucose-6-phosphate to fructose-6-phosphate, the second step in glycolysis, and the reverse reaction during gluconeogenesis. The sequence is that of Glucose-6-phosphate isomerase (PGI1) from Candida albicans (strain SC5314 / ATCC MYA-2876) (Yeast).